We begin with the raw amino-acid sequence, 547 residues long: Glucose-6-phosphate isomerase (547 aa).

Glu354 (proton donor) is an active-site residue. Residues His385 and Lys513 contribute to the active site.

The protein belongs to the GPI family.

Its subcellular location is the cytoplasm. The enzyme catalyses alpha-D-glucose 6-phosphate = beta-D-fructose 6-phosphate. The protein operates within carbohydrate biosynthesis; gluconeogenesis. It participates in carbohydrate degradation; glycolysis; D-glyceraldehyde 3-phosphate and glycerone phosphate from D-glucose: step 2/4. In terms of biological role, catalyzes the reversible isomerization of glucose-6-phosphate to fructose-6-phosphate. In Endomicrobium trichonymphae, this protein is Glucose-6-phosphate isomerase.